A 79-amino-acid polypeptide reads, in one-letter code: Large ribosomal subunit protein uL24 (79 aa).

It belongs to the universal ribosomal protein uL24 family. In terms of assembly, part of the 50S ribosomal subunit.

Its function is as follows. One of two assembly initiator proteins, it binds directly to the 5'-end of the 23S rRNA, where it nucleates assembly of the 50S subunit. One of the proteins that surrounds the polypeptide exit tunnel on the outside of the subunit. The polypeptide is Large ribosomal subunit protein uL24 (Lactobacillus johnsonii (strain CNCM I-12250 / La1 / NCC 533)).